A 244-amino-acid polypeptide reads, in one-letter code: Venom nerve growth factor (244 aa).

The signal sequence occupies residues 1 to 18; sequence MSMLCYTLIIAFLIGIWA. A propeptide spanning residues 19–125 is cleaved from the precursor; the sequence is APKSEDNVSL…SLNRNIRAKR (107 aa). 3 disulfide bridges follow: Cys-139/Cys-204, Cys-182/Cys-232, and Cys-192/Cys-234. Asn-148 carries an N-linked (GlcNAc...) asparagine glycan.

The protein belongs to the NGF-beta family. Homodimer; non-covalently linked. Post-translationally, N-glycosylated. As to expression, expressed by the venom gland.

It localises to the secreted. Functionally, nerve growth factor is important for the development and maintenance of the sympathetic and sensory nervous systems. It stimulates division and differentiation of sympathetic and embryonic sensory neurons as well as basal forebrain cholinergic neurons in the brain. Its relevance in the snake venom is not clear. However, it has been shown to inhibit metalloproteinase-dependent proteolysis of platelet glycoprotein Ib alpha, suggesting a metalloproteinase inhibition to prevent metalloprotease autodigestion and/or protection against prey proteases. Binds a lipid between the two protein chains in the homodimer. The lipid-bound form promotes histamine relase from mouse mast cells, contrary to the lipid-free form. It promotes neurite outgrowth in rat PC12 pheochromocytoma cells. This chain is Venom nerve growth factor, found in Macrovipera lebetinus (Levantine viper).